The following is a 109-amino-acid chain: MRVSANLKSVRLSAQKCRLVADLVRGKSVDQALNILAFSPKKGAVIIKKVLESAIANAEHNEGADIDTLRVTSIFVDKGASLKRFTARAKGRGNRIEKQTCHISLTVGN.

Belongs to the universal ribosomal protein uL22 family. In terms of assembly, part of the 50S ribosomal subunit.

This protein binds specifically to 23S rRNA; its binding is stimulated by other ribosomal proteins, e.g. L4, L17, and L20. It is important during the early stages of 50S assembly. It makes multiple contacts with different domains of the 23S rRNA in the assembled 50S subunit and ribosome. Its function is as follows. The globular domain of the protein is located near the polypeptide exit tunnel on the outside of the subunit, while an extended beta-hairpin is found that lines the wall of the exit tunnel in the center of the 70S ribosome. This is Large ribosomal subunit protein uL22 from Chromobacterium violaceum (strain ATCC 12472 / DSM 30191 / JCM 1249 / CCUG 213 / NBRC 12614 / NCIMB 9131 / NCTC 9757 / MK).